We begin with the raw amino-acid sequence, 391 residues long: Succinate--CoA ligase [GDP-forming] subunit beta, mitochondrial (391 aa).

Positions lysine 5 to phenylalanine 233 constitute an ATP-grasp domain. GTP is bound by residues glutamine 16, glycine 49 to glycine 51, and leucine 105. Mg(2+) contacts are provided by asparagine 202 and aspartate 216. Residues asparagine 267 and glycine 324–valine 326 contribute to the substrate site.

It belongs to the succinate/malate CoA ligase beta subunit family. GTP-specific subunit beta subfamily. As to quaternary structure, heterodimer of an alpha and a beta subunit. The beta subunit determines specificity for GTP. Requires Mg(2+) as cofactor. Widely expressed. Not present in breast muscle.

The protein resides in the mitochondrion. The catalysed reaction is GTP + succinate + CoA = succinyl-CoA + GDP + phosphate. It participates in carbohydrate metabolism; tricarboxylic acid cycle; succinate from succinyl-CoA (ligase route): step 1/1. In terms of biological role, GTP-specific succinyl-CoA synthetase functions in the citric acid cycle (TCA), coupling the hydrolysis of succinyl-CoA to the synthesis of GTP and thus represents the only step of substrate-level phosphorylation in the TCA. The beta subunit provides nucleotide specificity of the enzyme and binds the substrate succinate, while the binding sites for coenzyme A and phosphate are found in the alpha subunit. This is Succinate--CoA ligase [GDP-forming] subunit beta, mitochondrial from Columba livia (Rock dove).